The following is a 625-amino-acid chain: Complex I assembly factor ACAD9, mitochondrial (625 aa).

The transit peptide at 1-41 (MSGYVLFSRGATAAAAAARASRVLRVFTERRRTLHTSLQSC) directs the protein to the mitochondrion. Lys45 carries the post-translational modification N6-acetyllysine. Lys96 is subject to N6-succinyllysine. Glu430 functions as the Proton acceptor in the catalytic mechanism. A Phosphothreonine modification is found at Thr482. At Lys525 the chain carries N6-acetyllysine; alternate. Lys525 bears the N6-succinyllysine; alternate mark.

Belongs to the acyl-CoA dehydrogenase family. Homodimer. Interacts with NDUFAF1 and ECSIT. Part of the mitochondrial complex I assembly/MCIA complex that comprises at least the core subunits TMEM126B, NDUFAF1, ECSIT and ACAD9 and complement subunits such as COA1 and TMEM186. Interacts with TMEM70 and TMEM242. FAD is required as a cofactor.

The protein resides in the mitochondrion inner membrane. The catalysed reaction is eicosanoyl-CoA + oxidized [electron-transfer flavoprotein] + H(+) = (2E)-eicosenoyl-CoA + reduced [electron-transfer flavoprotein]. It carries out the reaction octadecanoyl-CoA + oxidized [electron-transfer flavoprotein] + H(+) = (2E)-octadecenoyl-CoA + reduced [electron-transfer flavoprotein]. It catalyses the reaction oxidized [electron-transfer flavoprotein] + hexadecanoyl-CoA + H(+) = (2E)-hexadecenoyl-CoA + reduced [electron-transfer flavoprotein]. The enzyme catalyses decanoyl-CoA + oxidized [electron-transfer flavoprotein] + H(+) = (2E)-decenoyl-CoA + reduced [electron-transfer flavoprotein]. The catalysed reaction is nonanoyl-CoA + oxidized [electron-transfer flavoprotein] + H(+) = (2E)-nonenoyl-CoA + reduced [electron-transfer flavoprotein]. It carries out the reaction pentadecanoyl-CoA + oxidized [electron-transfer flavoprotein] + H(+) = (2E)-pentadecenoyl-CoA + reduced [electron-transfer flavoprotein]. It catalyses the reaction undecanoyl-CoA + oxidized [electron-transfer flavoprotein] + H(+) = trans-2-undecenoyl-CoA + reduced [electron-transfer flavoprotein]. The enzyme catalyses (9Z)-hexadecenoyl-CoA + oxidized [electron-transfer flavoprotein] + H(+) = (2E,9Z)-hexadecadienoyl-CoA + reduced [electron-transfer flavoprotein]. The catalysed reaction is heptadecanoyl-CoA + oxidized [electron-transfer flavoprotein] + H(+) = trans-2-heptadecenoyl-CoA + reduced [electron-transfer flavoprotein]. It carries out the reaction (9E)-octadecenoyl-CoA + oxidized [electron-transfer flavoprotein] + H(+) = (2E,9E)-octadecadienoyl-CoA + reduced [electron-transfer flavoprotein]. It catalyses the reaction oxidized [electron-transfer flavoprotein] + (9Z)-octadecenoyl-CoA + H(+) = (2E,9Z)-octadecadienoyl-CoA + reduced [electron-transfer flavoprotein]. The enzyme catalyses (9Z,12Z)-octadecadienoyl-CoA + oxidized [electron-transfer flavoprotein] + H(+) = (2E,9Z,12Z)-octadecatrienoyl-CoA + reduced [electron-transfer flavoprotein]. The catalysed reaction is (4Z,7Z,10Z,13Z,16Z,19Z)-docosahexaenoyl-CoA + oxidized [electron-transfer flavoprotein] + H(+) = (2E,4Z,7Z,10Z,13Z,16Z,19Z)-docosaheptaenoyl-CoA + reduced [electron-transfer flavoprotein]. It carries out the reaction tetradecanoyl-CoA + oxidized [electron-transfer flavoprotein] + H(+) = (2E)-tetradecenoyl-CoA + reduced [electron-transfer flavoprotein]. As part of the MCIA complex, primarily participates in the assembly of the mitochondrial complex I and therefore plays a role in oxidative phosphorylation. This moonlighting protein also has a dehydrogenase activity toward a broad range of substrates with greater specificity for long-chain unsaturated acyl-CoAs. However, in vivo, it does not seem to play a primary role in fatty acid oxidation. In addition, the function in complex I assembly is independent of the dehydrogenase activity of the protein. This is Complex I assembly factor ACAD9, mitochondrial from Rattus norvegicus (Rat).